Here is a 373-residue protein sequence, read N- to C-terminus: 3-isopropylmalate dehydrogenase AMT6 (373 aa).

Residue 77 to 79 (VGG) participates in NADP(+) binding. Residues arginine 97 and arginine 136 each contribute to the substrate site. Residues aspartate 227, aspartate 252, and aspartate 256 each coordinate Mg(2+). 284–289 (SRIRGL) provides a ligand contact to NADP(+).

Belongs to the isocitrate and isopropylmalate dehydrogenases family. As to quaternary structure, homodimer. Mg(2+) serves as cofactor. The cofactor is Mn(2+).

It catalyses the reaction (2R,3S)-3-isopropylmalate + NAD(+) = 4-methyl-2-oxopentanoate + CO2 + NADH. Its pathway is amino-acid biosynthesis; L-leucine biosynthesis; L-leucine from 3-methyl-2-oxobutanoate: step 3/4. It participates in mycotoxin biosynthesis. In terms of biological role, 3-isopropylmalate dehydrogenase; part of the gene clusters that mediate the biosynthesis of AM-toxins, host-selective toxins (HSTs) causing Alternaria blotch on apple, a worldwide distributed disease. AM-toxins are cyclic depsipeptides containing the 3 residues 2-hydroxy-isovaleric acid (2-HIV), dehydroalanine, L-alanine which are common for all 3 AM-toxins I to III. The fourth precursor is L-alpha-amino-methoxyphenyl-valeric acid (L-Amv) for AM-toxin I, L-alpha-amino-phenyl-valeric acid (L-Apv) for AM-toxin II, and L-alpha-amino-hydroxyphenyl-valeric acid (L-Ahv) for AM-toxin III. AM-toxins have two target sites for affecting susceptible apple cells; they cause invagination of the plasma membrane and electrolyte loss and chloroplast disorganization. The non-ribosomal peptide synthetase AMT1 contains 4 catalytic modules and is responsible for activation of each residue in AM-toxin. The aldo-keto reductase AMT2 catalyzes the conversion of 2-keto-isovaleric acid (2-KIV) to 2-hydroxy-isovaleric acid (2-HIV), one of the precursor residues incorporated by AMT1 during AM-toxin biosynthesis, by reduction of its ketone to an alcohol. The cytochrome P450 monooxygenase AMT3 and the thioesterase AMT4 are also important for AM-toxin production, but their exact function within the AM-toxin biosynthesis are not known yet. Up to 21 proteins (including AMT1 to AMT4) are predicted to be involved in AM-toxin biosynthesis since their expression ishighly up-regulated in AM-toxin-producing cultures. The sequence is that of 3-isopropylmalate dehydrogenase AMT6 from Alternaria alternata (Alternaria rot fungus).